Consider the following 167-residue polypeptide: MLSKDIIKLLNEQVNKEMNSSNLYMSMSSWCYTHSLDGAGLFLFDHAAEEYEHAKKLIVFLNENNVPVQLTSISAPEHKFEGLTQIFQKAYEHEQHISESINNIVDHAIKGKDHATFNFLQWYVSEQHEEEVLFKDILDKIELIGNENHGLYLADQYVKGIAKSRKS.

The Ferritin-like diiron domain maps to Met1–Gly145. Residues Glu17, Glu50, His53, Glu94, and Gln127 each coordinate Fe cation.

This sequence belongs to the ferritin family. Prokaryotic subfamily. Homooligomer of 24 subunits that assemble into a spherical protein shell (12 +/- 1 nM diameter) that can sequester at least 2000 iron atoms.

Its subcellular location is the cytoplasm. The enzyme catalyses 4 Fe(2+) + O2 + 6 H2O = 4 iron(III) oxide-hydroxide + 12 H(+). Its function is as follows. Iron-storage protein. The sequence is that of Bacterial non-heme ferritin (ftnA) from Helicobacter pylori (strain ATCC 700392 / 26695) (Campylobacter pylori).